Consider the following 424-residue polypeptide: Alkaline nuclease (424 aa).

It belongs to the baculo-herpesviridae alkaline nuclease family. Interacts with LEF-3.

Its subcellular location is the host nucleus. May play a role in maturation and encapsidation of viral replicated genome, by promoting DNA homologous recombination. Exhibits endonuclease and 5'-&gt;3' exonuclease activities. The endonuclease activity displays a specificity for ssDNA in vitro. The polypeptide is Alkaline nuclease (ALK-EXO) (Orgyia pseudotsugata (Douglas-fir tussock moth)).